A 185-amino-acid chain; its full sequence is Probable RNA 2'-phosphotransferase (185 aa).

This sequence belongs to the KptA/TPT1 family.

In terms of biological role, removes the 2'-phosphate from RNA via an intermediate in which the phosphate is ADP-ribosylated by NAD followed by a presumed transesterification to release the RNA and generate ADP-ribose 1''-2''-cyclic phosphate (APPR&gt;P). May function as an ADP-ribosylase. The protein is Probable RNA 2'-phosphotransferase of Bacillus thuringiensis subsp. konkukian (strain 97-27).